Reading from the N-terminus, the 261-residue chain is Small ribosomal subunit protein eS1 (261 aa).

Residues 1–18 (MAVGKNKRISKGKKGGKK) are compositionally biased toward basic residues. The segment at 1 to 20 (MAVGKNKRISKGKKGGKKKA) is disordered.

Belongs to the eukaryotic ribosomal protein eS1 family. As to quaternary structure, component of the small ribosomal subunit. Mature ribosomes consist of a small (40S) and a large (60S) subunit. The 40S subunit contains about 33 different proteins and 1 molecule of RNA (18S). The 60S subunit contains about 49 different proteins and 3 molecules of RNA (25S, 5.8S and 5S).

The protein resides in the cytoplasm. This chain is Small ribosomal subunit protein eS1, found in Catharanthus roseus (Madagascar periwinkle).